A 223-amino-acid chain; its full sequence is UPF0173 metal-dependent hydrolase Amet_4625 (223 aa).

This sequence belongs to the UPF0173 family.

The chain is UPF0173 metal-dependent hydrolase Amet_4625 from Alkaliphilus metalliredigens (strain QYMF).